A 385-amino-acid chain; its full sequence is Phosphorylated adapter RNA export protein (385 aa).

A compositionally biased stretch (acidic residues) spans 1-18; that stretch reads MALEAGDMEEGQLSDSDS. A disordered region spans residues 1-26; sequence MALEAGDMEEGQLSDSDSDMTVVPSD. Alanine 2 carries the N-acetylalanine modification. The interval 2–320 is necessary for interaction with CBP80; it reads ALEAGDMEEG…KAARKRRTQL (319 aa). 6 positions are modified to phosphoserine: serine 14, serine 16, serine 56, serine 57, serine 60, and serine 63. Residues 71 to 74 carry the Nuclear localization signal motif; the sequence is KRKR. The segment at 72-101 is disordered; it reads RKRQKCHSPPPKPEPFPFGQSGQKPALNGG. The short motif at 120 to 129 is the Nuclear export signal element; that stretch reads VATELGILGM. A compositionally biased stretch (basic and acidic residues) spans 164–184; that stretch reads KDLDEYMHGDKKPGSKEEENG. Residues 164–192 are disordered; that stretch reads KDLDEYMHGDKKPGSKEEENGQGHLKRKR. Residues 189 to 192 carry the Nuclear localization signal motif; the sequence is KRKR. At serine 217 the chain carries Phosphoserine. Residues 219–319 form a sufficient for poly U RNA-binding region; it reads EKVADEIAFR…KKAARKRRTQ (101 aa). A necessary for poly U RNA-binding and snRNA export region spans residues 270 to 278; sequence GSRRRTPGG. At threonine 287 the chain carries Phosphothreonine. The disordered stretch occupies residues 334-385; it reads FQEDDDTSRETFASDTNEALASLDEAQEGPGETKLDAEDAIEVDHPQDLDIF. The segment covering 343-352 has biased composition (polar residues); that stretch reads ETFASDTNEA. A Phosphoserine modification is found at serine 347. The span at 364–385 shows a compositional bias: basic and acidic residues; sequence GETKLDAEDAIEVDHPQDLDIF.

The protein belongs to the PHAX family. In terms of assembly, found in a U snRNA export complex with PHAX/RNUXA, NCBP1/CBP80, NCBP2/CBP20, RAN, XPO1 and m7G-capped RNA. Part of a precomplex with PHAX/RNUXA, NCBP1/CBP80, NCBP2/CBP20 and m7G-capped RNA. Interacts with NCBP1/CBP80. Found in a complex with snoRNA. Interacts with NCBP2/CBP20. Interacts with DDX39A; this interaction stimulates PHAX RNA binding activity. Phosphorylated in the nucleus. Dephosphorylated in the cytoplasm. Expressed in dorsal root ganglia and sensory neuron cell bodies.

It localises to the nucleus. Its subcellular location is the nucleoplasm. The protein resides in the cajal body. The protein localises to the cytoplasm. Functionally, a phosphoprotein adapter involved in the XPO1-mediated U snRNA export from the nucleus. Bridge components required for U snRNA export, the cap binding complex (CBC)-bound snRNA on the one hand and the GTPase Ran in its active GTP-bound form together with the export receptor XPO1 on the other. Its phosphorylation in the nucleus is required for U snRNA export complex assembly and export, while its dephosphorylation in the cytoplasm causes export complex disassembly. It is recycled back to the nucleus via the importin alpha/beta heterodimeric import receptor. The directionality of nuclear export is thought to be conferred by an asymmetric distribution of the GTP- and GDP-bound forms of Ran between the cytoplasm and nucleus. Its compartmentalized phosphorylation cycle may also contribute to the directionality of export. Binds strongly to m7G-capped U1 and U5 small nuclear RNAs (snRNAs) in a sequence-unspecific manner and phosphorylation-independent manner. Also plays a role in the biogenesis of U3 small nucleolar RNA (snoRNA). Involved in the U3 snoRNA transport from nucleoplasm to Cajal bodies. Binds strongly to m7G-capped U3, U8 and U13 precursor snoRNAs and weakly to trimethylated (TMG)-capped U3, U8 and U13 snoRNAs. Also binds to telomerase RNA. The polypeptide is Phosphorylated adapter RNA export protein (Phax) (Rattus norvegicus (Rat)).